The following is a 769-amino-acid chain: Polyribonucleotide nucleotidyltransferase (769 aa).

Mg(2+) contacts are provided by Asp-490 and Asp-496. In terms of domain architecture, KH spans Pro-557 to Ile-616. Positions Gly-626–Arg-694 constitute an S1 motif domain. Residues Pro-700 to Asn-734 show a composition bias toward basic and acidic residues. A disordered region spans residues Pro-700–Glu-769. Positions Asn-736 to Ser-746 are enriched in low complexity. Basic and acidic residues predominate over residues Phe-747–Glu-769.

The protein belongs to the polyribonucleotide nucleotidyltransferase family. Mg(2+) is required as a cofactor.

It is found in the cytoplasm. It catalyses the reaction RNA(n+1) + phosphate = RNA(n) + a ribonucleoside 5'-diphosphate. In terms of biological role, involved in mRNA degradation. Catalyzes the phosphorolysis of single-stranded polyribonucleotides processively in the 3'- to 5'-direction. This chain is Polyribonucleotide nucleotidyltransferase, found in Lactococcus lactis subsp. cremoris (strain SK11).